Consider the following 542-residue polypeptide: Putative serine/threonine-protein kinase L205 (542 aa).

The segment covering 20–30 (FEKKSVGHNSD) has biased composition (basic and acidic residues). Residues 20-49 (FEKKSVGHNSDDEYDDTVPYNEDDETSEEE) form a disordered region. Residues 31 to 49 (DEYDDTVPYNEDDETSEEE) are compositionally biased toward acidic residues. The 470-residue stretch at 69 to 538 (YLLLKKIGSG…ADELLKHPWL (470 aa)) folds into the Protein kinase domain. ATP is bound by residues 75–83 (IGSGNNASV) and Lys98. Catalysis depends on Asp201, which acts as the Proton acceptor. The interval 278–314 (EELIPDDPDNNEKYYDSTDSEEYDYSDNSDYYDDDED) is disordered. A compositionally biased stretch (acidic residues) spans 295–314 (TDSEEYDYSDNSDYYDDDED).

The protein belongs to the protein kinase superfamily. Ser/Thr protein kinase family.

The catalysed reaction is L-seryl-[protein] + ATP = O-phospho-L-seryl-[protein] + ADP + H(+). The enzyme catalyses L-threonyl-[protein] + ATP = O-phospho-L-threonyl-[protein] + ADP + H(+). The polypeptide is Putative serine/threonine-protein kinase L205 (Acanthamoeba polyphaga (Amoeba)).